The sequence spans 523 residues: Bifunctional purine biosynthesis protein PurH (523 aa).

One can recognise an MGS-like domain in the interval 1–145 (MIKQALLSVS…KNHRDVTVIV (145 aa)).

It belongs to the PurH family.

It catalyses the reaction (6R)-10-formyltetrahydrofolate + 5-amino-1-(5-phospho-beta-D-ribosyl)imidazole-4-carboxamide = 5-formamido-1-(5-phospho-D-ribosyl)imidazole-4-carboxamide + (6S)-5,6,7,8-tetrahydrofolate. It carries out the reaction IMP + H2O = 5-formamido-1-(5-phospho-D-ribosyl)imidazole-4-carboxamide. It participates in purine metabolism; IMP biosynthesis via de novo pathway; 5-formamido-1-(5-phospho-D-ribosyl)imidazole-4-carboxamide from 5-amino-1-(5-phospho-D-ribosyl)imidazole-4-carboxamide (10-formyl THF route): step 1/1. It functions in the pathway purine metabolism; IMP biosynthesis via de novo pathway; IMP from 5-formamido-1-(5-phospho-D-ribosyl)imidazole-4-carboxamide: step 1/1. The chain is Bifunctional purine biosynthesis protein PurH from Cupriavidus pinatubonensis (strain JMP 134 / LMG 1197) (Cupriavidus necator (strain JMP 134)).